The chain runs to 811 residues: Receptor-like protein 46 (811 aa).

The N-terminal stretch at 1–21 (MSKQCLLSCFLFFCFFIPQLS) is a signal peptide. Topologically, residues 22–782 (FSCPQDQRQS…EEEDKEEEET (761 aa)) are extracellular. Residues Asn-46, Asn-71, Asn-128, and Asn-143 are each glycosylated (N-linked (GlcNAc...) asparagine). LRR repeat units follow at residues 104 to 128 (INSL…AFVN), 129 to 153 (LTSL…LFSL), 155 to 177 (NLQR…IKEL), 178 to 201 (KNLQ…IGSL), 203 to 225 (ELLT…VSRL), 226 to 249 (TKLK…IGNL), 251 to 273 (NLST…IHNL), 275 to 298 (NLET…WLFG), 299 to 322 (LQKL…GYVF), 324 to 348 (QFKL…LKNQ), 349 to 369 (TALV…PKWL), 370 to 395 (ADLK…LFQR), 397 to 419 (SLYY…IGES), 421 to 442 (VMVL…ITKI), 443 to 466 (PFLK…RPES), 468 to 488 (LEWL…YFGG), 490 to 510 (TSML…NFRN), 511 to 534 (LSYL…LISQ), 536 to 560 (SSSV…ISNL), 561 to 583 (TSLK…SLGN), 643 to 665 (LYTL…LGNL), 666 to 688 (KSLK…SFGD), 690 to 713 (EKVE…LSKL), and 714 to 738 (SELN…QLDR). Asn-215 is a glycosylation site (N-linked (GlcNAc...) asparagine). N-linked (GlcNAc...) asparagine glycosylation occurs at Asn-251. A glycan (N-linked (GlcNAc...) asparagine) is linked at Asn-347. N-linked (GlcNAc...) asparagine glycans are attached at residues Asn-376, Asn-407, and Asn-430. Asn-499 and Asn-510 each carry an N-linked (GlcNAc...) asparagine glycan. 3 N-linked (GlcNAc...) asparagine glycosylation sites follow: Asn-546, Asn-559, and Asn-583. Asn-672 and Asn-701 each carry an N-linked (GlcNAc...) asparagine glycan. Asn-747 carries an N-linked (GlcNAc...) asparagine glycan. The chain crosses the membrane as a helical span at residues 783–803 (IFSWNAAAIGCSCGFLIAVVF). Topologically, residues 804–811 (MSYNELWK) are cytoplasmic.

It belongs to the RLP family.

The protein localises to the cell membrane. This chain is Receptor-like protein 46, found in Arabidopsis thaliana (Mouse-ear cress).